The chain runs to 461 residues: Bifunctional protein GlmU (461 aa).

The tract at residues 1–227 (MEVIALILAA…PDEVLGVNDR (227 aa)) is pyrophosphorylase. Residues 8–11 (LAAG), Lys22, Gln73, 78–79 (GT), 100–102 (YGD), Gly137, Glu152, Asn167, and Asn225 contribute to the UDP-N-acetyl-alpha-D-glucosamine site. Residue Asp102 coordinates Mg(2+). Asn225 lines the Mg(2+) pocket. Residues 228 to 248 (RQLAELERIYQVHQARALMER) form a linker region. Residues 249 to 461 (GVTLRDPARF…EKARKESCAE (213 aa)) are N-acetyltransferase. 2 residues coordinate UDP-N-acetyl-alpha-D-glucosamine: Arg332 and Lys350. Catalysis depends on His362, which acts as the Proton acceptor. UDP-N-acetyl-alpha-D-glucosamine is bound by residues Tyr365 and Asn376. Residues Ala379, 385–386 (NY), Ser404, Ala422, and Arg439 contribute to the acetyl-CoA site.

The protein in the N-terminal section; belongs to the N-acetylglucosamine-1-phosphate uridyltransferase family. In the C-terminal section; belongs to the transferase hexapeptide repeat family. In terms of assembly, homotrimer. It depends on Mg(2+) as a cofactor.

It is found in the cytoplasm. It carries out the reaction alpha-D-glucosamine 1-phosphate + acetyl-CoA = N-acetyl-alpha-D-glucosamine 1-phosphate + CoA + H(+). The enzyme catalyses N-acetyl-alpha-D-glucosamine 1-phosphate + UTP + H(+) = UDP-N-acetyl-alpha-D-glucosamine + diphosphate. It participates in nucleotide-sugar biosynthesis; UDP-N-acetyl-alpha-D-glucosamine biosynthesis; N-acetyl-alpha-D-glucosamine 1-phosphate from alpha-D-glucosamine 6-phosphate (route II): step 2/2. Its pathway is nucleotide-sugar biosynthesis; UDP-N-acetyl-alpha-D-glucosamine biosynthesis; UDP-N-acetyl-alpha-D-glucosamine from N-acetyl-alpha-D-glucosamine 1-phosphate: step 1/1. The protein operates within bacterial outer membrane biogenesis; LPS lipid A biosynthesis. Functionally, catalyzes the last two sequential reactions in the de novo biosynthetic pathway for UDP-N-acetylglucosamine (UDP-GlcNAc). The C-terminal domain catalyzes the transfer of acetyl group from acetyl coenzyme A to glucosamine-1-phosphate (GlcN-1-P) to produce N-acetylglucosamine-1-phosphate (GlcNAc-1-P), which is converted into UDP-GlcNAc by the transfer of uridine 5-monophosphate (from uridine 5-triphosphate), a reaction catalyzed by the N-terminal domain. The polypeptide is Bifunctional protein GlmU (Methylococcus capsulatus (strain ATCC 33009 / NCIMB 11132 / Bath)).